A 364-amino-acid chain; its full sequence is Tubulin alpha-2 chain (364 aa).

Positions 59, 60, 94, 121, and 144 each coordinate GTP. Glu170 is an active-site residue.

It belongs to the tubulin family. In terms of assembly, dimer of alpha and beta chains. A typical microtubule is a hollow water-filled tube with an outer diameter of 25 nm and an inner diameter of 15 nM. Alpha-beta heterodimers associate head-to-tail to form protofilaments running lengthwise along the microtubule wall with the beta-tubulin subunit facing the microtubule plus end conferring a structural polarity. Microtubules usually have 13 protofilaments but different protofilament numbers can be found in some organisms and specialized cells. Mg(2+) serves as cofactor. Undergoes a tyrosination/detyrosination cycle, the cyclic removal and re-addition of a C-terminal tyrosine residue by the enzymes tubulin tyrosine carboxypeptidase (TTCP) and tubulin tyrosine ligase (TTL), respectively.

The protein localises to the cytoplasm. The protein resides in the cytoskeleton. It catalyses the reaction GTP + H2O = GDP + phosphate + H(+). Its function is as follows. Tubulin is the major constituent of microtubules, a cylinder consisting of laterally associated linear protofilaments composed of alpha- and beta-tubulin heterodimers. Microtubules grow by the addition of GTP-tubulin dimers to the microtubule end, where a stabilizing cap forms. Below the cap, tubulin dimers are in GDP-bound state, owing to GTPase activity of alpha-tubulin. This is Tubulin alpha-2 chain (TUBA2) from Anemia phyllitidis (Fern).